A 435-amino-acid chain; its full sequence is 5-methylthioadenosine/S-adenosylhomocysteine deaminase (435 aa).

Zn(2+) contacts are provided by histidine 65 and histidine 67. Residues glutamate 94, arginine 150, and histidine 189 each coordinate substrate. Histidine 216 lines the Zn(2+) pocket. Substrate-binding residues include glutamate 219 and aspartate 304. Aspartate 304 provides a ligand contact to Zn(2+).

This sequence belongs to the metallo-dependent hydrolases superfamily. MTA/SAH deaminase family. Zn(2+) serves as cofactor.

It catalyses the reaction S-adenosyl-L-homocysteine + H2O + H(+) = S-inosyl-L-homocysteine + NH4(+). The catalysed reaction is S-methyl-5'-thioadenosine + H2O + H(+) = S-methyl-5'-thioinosine + NH4(+). Catalyzes the deamination of 5-methylthioadenosine and S-adenosyl-L-homocysteine into 5-methylthioinosine and S-inosyl-L-homocysteine, respectively. Is also able to deaminate adenosine. The sequence is that of 5-methylthioadenosine/S-adenosylhomocysteine deaminase from Bacillus cereus (strain B4264).